The primary structure comprises 707 residues: uncharacterized protein (707 aa).

Disordered stretches follow at residues 15–122 (ALAK…LESY) and 667–707 (ESVQ…DIDE). Composition is skewed to basic and acidic residues over residues 18 to 32 (KKNDKIKKKDTDKGI) and 40 to 52 (EGKDETLKRDVEK). S112 is subject to Phosphoserine. Positions 659–700 (EEQRKLIRESVQQDQEHKEQMRQKKKQALKSDDIELDDLSEE) form a coiled coil. Over residues 692–707 (IELDDLSEEEAEDIDE) the composition is skewed to acidic residues.

This sequence belongs to the NOC2 family.

Its subcellular location is the nucleus. It is found in the nucleolus. This is an uncharacterized protein from Schizosaccharomyces pombe (strain 972 / ATCC 24843) (Fission yeast).